Consider the following 131-residue polypeptide: Large ribosomal subunit protein uL18 (131 aa).

Belongs to the universal ribosomal protein uL18 family. In terms of assembly, part of the 50S ribosomal subunit; part of the 5S rRNA/L5/L18/L25 subcomplex. Contacts the 5S and 23S rRNAs.

Functionally, this is one of the proteins that bind and probably mediate the attachment of the 5S RNA into the large ribosomal subunit, where it forms part of the central protuberance. The chain is Large ribosomal subunit protein uL18 from Corynebacterium kroppenstedtii (strain DSM 44385 / JCM 11950 / CIP 105744 / CCUG 35717).